The primary structure comprises 100 residues: Cytochrome bo(3) ubiquinol oxidase subunit 4 (100 aa).

Topologically, residues M1–Y9 are cytoplasmic. A helical transmembrane segment spans residues L10–F32. At S33–Y36 the chain is on the extracellular side. A helical membrane pass occupies residues L37–L59. The Cytoplasmic portion of the chain corresponds to D60–K68. A helical membrane pass occupies residues L69–I90. Residues K91–M100 are Extracellular-facing.

Belongs to the cytochrome c oxidase bacterial subunit 4 family. Heterooctamer of two A chains, two B chains, two C chains and two D chains.

It is found in the cell membrane. Functionally, cytochrome bo(3) ubiquinol terminal oxidase is the component of the aerobic respiratory chain of E.coli that predominates when cells are grown at high aeration. Has proton pump activity across the membrane in addition to electron transfer, pumping 2 protons/electron. This chain is Cytochrome bo(3) ubiquinol oxidase subunit 4 (cyoD), found in Buchnera aphidicola subsp. Baizongia pistaciae (strain Bp).